Reading from the N-terminus, the 232-residue chain is DQGAGATYLEPSASQIGHKESIKDTARVLGRMYDAIEYRGFGQEIIEELAKYAGVPVFNGLTNEFHPTQMLADALTMREHSSKPLNQTAFAYVGDARYNMGNSLLILGAKLGMDVRIGAPESLWPSEGIIAAAHAVAKETGAKITLTENAHEAVNGVGFIHTDVWVSMGEPKEVWQERIDLLKDYRVTPELMAASGNPQVKFMHCLPAFHNRETKVGEWIYETFGLNGVEVT.

Residues Gln15, Arg39, and 66 to 69 (HPTQ) each bind carbamoyl phosphate. L-ornithine-binding positions include Asn99, Asp163, and 167-168 (SM). Carbamoyl phosphate-binding positions include 204 to 207 (HCLP) and Thr232.

This sequence belongs to the aspartate/ornithine carbamoyltransferase superfamily. OTCase family.

It is found in the cytoplasm. The enzyme catalyses carbamoyl phosphate + L-ornithine = L-citrulline + phosphate + H(+). It participates in amino-acid biosynthesis; L-arginine biosynthesis; L-arginine from L-ornithine and carbamoyl phosphate: step 1/3. Reversibly catalyzes the transfer of the carbamoyl group from carbamoyl phosphate (CP) to the N(epsilon) atom of ornithine (ORN) to produce L-citrulline. The polypeptide is Ornithine carbamoyltransferase (argF) (Neisseria perflava).